A 180-amino-acid polypeptide reads, in one-letter code: Large ribosomal subunit protein uL10 (180 aa).

Belongs to the universal ribosomal protein uL10 family. Part of the ribosomal stalk of the 50S ribosomal subunit. The N-terminus interacts with L11 and the large rRNA to form the base of the stalk. The C-terminus forms an elongated spine to which L12 dimers bind in a sequential fashion forming a multimeric L10(L12)X complex.

Forms part of the ribosomal stalk, playing a central role in the interaction of the ribosome with GTP-bound translation factors. In Thermosipho melanesiensis (strain DSM 12029 / CIP 104789 / BI429), this protein is Large ribosomal subunit protein uL10.